The primary structure comprises 257 residues: Hydroxyacylglutathione hydrolase (257 aa).

Zn(2+)-binding residues include His53, His55, Asp57, His58, His109, Asp126, and His164.

It belongs to the metallo-beta-lactamase superfamily. Glyoxalase II family. Monomer. It depends on Zn(2+) as a cofactor.

It carries out the reaction an S-(2-hydroxyacyl)glutathione + H2O = a 2-hydroxy carboxylate + glutathione + H(+). Its pathway is secondary metabolite metabolism; methylglyoxal degradation; (R)-lactate from methylglyoxal: step 2/2. Functionally, thiolesterase that catalyzes the hydrolysis of S-D-lactoyl-glutathione to form glutathione and D-lactic acid. The chain is Hydroxyacylglutathione hydrolase from Baumannia cicadellinicola subsp. Homalodisca coagulata.